A 109-amino-acid polypeptide reads, in one-letter code: Mitochondrial import receptor subunit TOM22 homolog (109 aa).

The Cytoplasmic portion of the chain corresponds to 1–60; sequence MALVRDDFDDIPDSEIHETIVERIEGLGEMFPDALRSAVHSTVDWSIWGVKGVFSLTKST. A helical transmembrane segment spans residues 61-77; the sequence is IWVVSTTSLIAFLPYII. Residues 78 to 109 are Mitochondrial intermembrane-facing; the sequence is EKERSDLEKTQVAQQRQMLLGPSAAIQQAKTA.

It belongs to the Tom22 family. As to quaternary structure, forms part of the preprotein translocase complex of the outer mitochondrial membrane (TOM complex).

The protein localises to the mitochondrion outer membrane. Central receptor component of the translocase of the outer membrane of mitochondria (TOM complex) responsible for the recognition and translocation of cytosolically synthesized mitochondrial preproteins. Together with the peripheral receptor tomm-20 functions as the transit peptide receptor and facilitates the movement of preproteins into the translocation pore. The protein is Mitochondrial import receptor subunit TOM22 homolog of Caenorhabditis elegans.